Here is a 2093-residue protein sequence, read N- to C-terminus: Nuclear-pore anchor (2093 aa).

4 coiled-coil regions span residues Leu57–Leu362, Met439–Gln529, Asp570–Glu627, and Gln688–Lys1172. The tract at residues Asn1175–Asp1198 is disordered. Residues Arg1182–Thr1191 show a composition bias toward low complexity. Coiled coils occupy residues Leu1208–Ala1252 and Glu1293–Ala1585. Disordered regions lie at residues Tyr1453–Glu1489, Lys1525–Lys1555, and Ser1627–Pro2093. A compositionally biased stretch (basic and acidic residues) spans Gln1470–Thr1483. Polar residues predominate over residues Ser1652–Leu1674. 2 stretches are compositionally biased toward basic and acidic residues: residues Lys1710–Val1719 and Asp1729–Glu1740. Over residues Ser1764–Glu1779 the composition is skewed to polar residues. Over residues Lys1789–Ala1808 the composition is skewed to basic and acidic residues. Positions Thr1818–Glu1849 form a coiled coil. Acidic residues-rich tracts occupy residues Gly1821–Asn1830 and Tyr1838–Thr1903. The segment covering Thr1921–Arg1931 has biased composition (polar residues). The segment covering Ala1935–Ala1963 has biased composition (acidic residues). Residues Thr1984 to Ser2009 show a composition bias toward low complexity. Position 2022 is a phosphoserine (Ser2022).

As to quaternary structure, part of the nuclear pore complex (NPC). The NPC has an eight-fold symmetrical structure comprising a central transport channel and two rings, the cytoplasmic and nuclear rings, to which eight filaments are attached. The cytoplasmic filaments have loose ends, while the nuclear filaments are joined in a distal ring, forming a nuclear basket. NPCs are highly dynamic in configuration and composition, and can be devided in 3 subcomplexes, the NUP62 subcomplex, the NUP107-160 subcomplex and the NUP93 subcomplex, containing approximately 30 different nucleoporin proteins. Interacts with MAD1 and (via N-terminus) with ESD4. As to expression, ubiquitous. Highest expression in the shoot apical region.

Its subcellular location is the nucleus envelope. It is found in the nucleus membrane. The protein resides in the nucleus. The protein localises to the nuclear pore complex. Functionally, component of the nuclear pore complex. Acts as a docking site for activities required for desumoylation and mRNA export. Required for the proper expression or localization of a subset of miRNAs. Plays a role in meristematic cell division by interacting with spindle assembly checkpoint proteins. The protein is Nuclear-pore anchor of Arabidopsis thaliana (Mouse-ear cress).